Reading from the N-terminus, the 519-residue chain is Exodeoxyribonuclease 7 large subunit (519 aa).

Positions valine 500–leucine 519 are disordered.

Belongs to the XseA family. In terms of assembly, heterooligomer composed of large and small subunits.

The protein resides in the cytoplasm. It carries out the reaction Exonucleolytic cleavage in either 5'- to 3'- or 3'- to 5'-direction to yield nucleoside 5'-phosphates.. Bidirectionally degrades single-stranded DNA into large acid-insoluble oligonucleotides, which are then degraded further into small acid-soluble oligonucleotides. The polypeptide is Exodeoxyribonuclease 7 large subunit (Cereibacter sphaeroides (strain ATCC 17023 / DSM 158 / JCM 6121 / CCUG 31486 / LMG 2827 / NBRC 12203 / NCIMB 8253 / ATH 2.4.1.) (Rhodobacter sphaeroides)).